A 420-amino-acid chain; its full sequence is Gamma-glutamyl phosphate reductase (420 aa).

This sequence belongs to the gamma-glutamyl phosphate reductase family.

It is found in the cytoplasm. It carries out the reaction L-glutamate 5-semialdehyde + phosphate + NADP(+) = L-glutamyl 5-phosphate + NADPH + H(+). It participates in amino-acid biosynthesis; L-proline biosynthesis; L-glutamate 5-semialdehyde from L-glutamate: step 2/2. Catalyzes the NADPH-dependent reduction of L-glutamate 5-phosphate into L-glutamate 5-semialdehyde and phosphate. The product spontaneously undergoes cyclization to form 1-pyrroline-5-carboxylate. This chain is Gamma-glutamyl phosphate reductase, found in Neisseria meningitidis serogroup C / serotype 2a (strain ATCC 700532 / DSM 15464 / FAM18).